The chain runs to 89 residues: Acylphosphatase (89 aa).

The Acylphosphatase-like domain occupies 3-89 (QKHLQVFGTV…SEDFSDFKSI (87 aa)). Residues Arg-18 and Asn-36 contribute to the active site.

The protein belongs to the acylphosphatase family.

It catalyses the reaction an acyl phosphate + H2O = a carboxylate + phosphate + H(+). The polypeptide is Acylphosphatase (acyP) (Staphylococcus haemolyticus (strain JCSC1435)).